We begin with the raw amino-acid sequence, 203 residues long: Glycerol-3-phosphate acyltransferase (203 aa).

The next 4 membrane-spanning stretches (helical) occupy residues 6–26 (LTLLMIVAAYLAGSVSSAVLV), 82–102 (AISLGLIAIAACLGHIYPVFF), 118–138 (APIGDDLAICLMASWVVLVLI), and 141–161 (YSSLAAIITALLAPLYTWWLD).

The protein belongs to the PlsY family. As to quaternary structure, probably interacts with PlsX.

Its subcellular location is the cell inner membrane. The catalysed reaction is an acyl phosphate + sn-glycerol 3-phosphate = a 1-acyl-sn-glycero-3-phosphate + phosphate. Its pathway is lipid metabolism; phospholipid metabolism. In terms of biological role, catalyzes the transfer of an acyl group from acyl-phosphate (acyl-PO(4)) to glycerol-3-phosphate (G3P) to form lysophosphatidic acid (LPA). This enzyme utilizes acyl-phosphate as fatty acyl donor, but not acyl-CoA or acyl-ACP. The protein is Glycerol-3-phosphate acyltransferase of Shewanella oneidensis (strain ATCC 700550 / JCM 31522 / CIP 106686 / LMG 19005 / NCIMB 14063 / MR-1).